The following is a 239-amino-acid chain: DNA repair protein RecO (239 aa).

It belongs to the RecO family.

Functionally, involved in DNA repair and RecF pathway recombination. The chain is DNA repair protein RecO from Cereibacter sphaeroides (strain ATCC 17029 / ATH 2.4.9) (Rhodobacter sphaeroides).